A 478-amino-acid polypeptide reads, in one-letter code: Proline--tRNA ligase (478 aa).

This sequence belongs to the class-II aminoacyl-tRNA synthetase family. ProS type 3 subfamily. In terms of assembly, homodimer.

It localises to the cytoplasm. The catalysed reaction is tRNA(Pro) + L-proline + ATP = L-prolyl-tRNA(Pro) + AMP + diphosphate. Its function is as follows. Catalyzes the attachment of proline to tRNA(Pro) in a two-step reaction: proline is first activated by ATP to form Pro-AMP and then transferred to the acceptor end of tRNA(Pro). This chain is Proline--tRNA ligase, found in Methanococcoides burtonii (strain DSM 6242 / NBRC 107633 / OCM 468 / ACE-M).